Here is a 342-residue protein sequence, read N- to C-terminus: 4-hydroxythreonine-4-phosphate dehydrogenase (342 aa).

Substrate-binding residues include His140 and Thr141. Positions 175, 220, and 275 each coordinate a divalent metal cation. Positions 283, 292, and 301 each coordinate substrate.

It belongs to the PdxA family. Homodimer. The cofactor is Zn(2+). Mg(2+) is required as a cofactor. It depends on Co(2+) as a cofactor.

The protein resides in the cytoplasm. The enzyme catalyses 4-(phosphooxy)-L-threonine + NAD(+) = 3-amino-2-oxopropyl phosphate + CO2 + NADH. It functions in the pathway cofactor biosynthesis; pyridoxine 5'-phosphate biosynthesis; pyridoxine 5'-phosphate from D-erythrose 4-phosphate: step 4/5. Catalyzes the NAD(P)-dependent oxidation of 4-(phosphooxy)-L-threonine (HTP) into 2-amino-3-oxo-4-(phosphooxy)butyric acid which spontaneously decarboxylates to form 3-amino-2-oxopropyl phosphate (AHAP). The polypeptide is 4-hydroxythreonine-4-phosphate dehydrogenase (Rhizobium meliloti (strain 1021) (Ensifer meliloti)).